We begin with the raw amino-acid sequence, 230 residues long: 5'-methylthioadenosine/S-adenosylhomocysteine nucleosidase (230 aa).

Glu12 acts as the Proton acceptor in catalysis. Residues Gly78, Met153, and 174–175 contribute to the substrate site; that span reads ME. Asp198 (proton donor) is an active-site residue.

This sequence belongs to the PNP/UDP phosphorylase family. MtnN subfamily.

It catalyses the reaction S-adenosyl-L-homocysteine + H2O = S-(5-deoxy-D-ribos-5-yl)-L-homocysteine + adenine. The catalysed reaction is S-methyl-5'-thioadenosine + H2O = 5-(methylsulfanyl)-D-ribose + adenine. It carries out the reaction 5'-deoxyadenosine + H2O = 5-deoxy-D-ribose + adenine. It participates in amino-acid biosynthesis; L-methionine biosynthesis via salvage pathway; S-methyl-5-thio-alpha-D-ribose 1-phosphate from S-methyl-5'-thioadenosine (hydrolase route): step 1/2. Its function is as follows. Catalyzes the irreversible cleavage of the glycosidic bond in both 5'-methylthioadenosine (MTA) and S-adenosylhomocysteine (SAH/AdoHcy) to adenine and the corresponding thioribose, 5'-methylthioribose and S-ribosylhomocysteine, respectively. Also cleaves 5'-deoxyadenosine, a toxic by-product of radical S-adenosylmethionine (SAM) enzymes, into 5-deoxyribose and adenine. This chain is 5'-methylthioadenosine/S-adenosylhomocysteine nucleosidase, found in Aeromonas salmonicida (strain A449).